The primary structure comprises 357 residues: U5 small nuclear ribonucleoprotein 40 kDa protein (357 aa).

K18 participates in a covalent cross-link: Glycyl lysine isopeptide (Lys-Gly) (interchain with G-Cter in SUMO2). Asymmetric dimethylarginine is present on R21. WD repeat units lie at residues 64-103, 107-146, 149-189, 191-230, 233-272, 283-322, and 325-357; these read GHEG…DNYA, GHSG…RVKR, GHTS…AIQT, QNTY…LTYT, GHAD…PKER, NFEK…ILYK, and GHAG…GEIQ. K270 participates in a covalent cross-link: Glycyl lysine isopeptide (Lys-Gly) (interchain with G-Cter in SUMO2).

Component of the pre-catalytic and catalytic spliceosome complexes. Component of the postcatalytic spliceosome P complex. Part of the U5 snRNP complex. Interacts with PRPF8. Component of the U4/U6-U5 tri-snRNP complex composed of the U4, U6 and U5 snRNAs and at least PRPF3, PRPF4, PRPF6, PRPF8, PRPF31, SNRNP200, TXNL4A, WDR57, SNRNP40, DDX23, CD2BP2, PPIH, SNU13, EFTUD2, SART1 and USP39. Component of the minor spliceosome, which splices U12-type introns.

The protein localises to the nucleus. Functionally, required for pre-mRNA splicing as component of the activated spliceosome. Component of the U5 small nuclear ribonucleoprotein (snRNP) complex and the U4/U6-U5 tri-snRNP complex, building blocks of the spliceosome. As a component of the minor spliceosome, involved in the splicing of U12-type introns in pre-mRNAs. The sequence is that of U5 small nuclear ribonucleoprotein 40 kDa protein (SNRNP40) from Homo sapiens (Human).